A 617-amino-acid chain; its full sequence is MDSDFGIPRELSPLQQLRSQYHPELPPCLQGTTVRVELGDGTTVAKAGDAHIIARAFPHTLGQPLAHFLRATAKVADAQIITEHPVKRVGIVFCGRQAPGGHNVVWGLYEALKVHNAKNTLLGFLGGSEGLFAQKTLEITDEVLQTYKNQGGYDMLGRTKDQIRTTEQVNAALKACTDLKLDSLVIIGGVTSNTDAAHLAEFFAEAKCSTKVVGVPVTINGDLKNQFVEANVGFDTTCKVNSQLISNICTDALSAEKYYYFVRLMGRKHSHVALECTLQSHPNMVILGEEVTASKLTIFDIIKQICDAVQARAEQDKNHGVILIPEGLVESIPELYALLKEIHGLLKEGVQVDNISTQLSSWSSALFEFLPPFIKKQLLLHPESDDSAQLSQIETEKLLAYLVETEMNKRLKEGTYKGKKFNAICHFFGYQARGSLPSKFDCDYAYVLGHVCYHILAAGLNGYMATVTNLKSPVNKWKCGAAPISAMMTVKRWSQNSGSTTIGRPVIHPASVDLKGKAYDLLRQNAQKFLMEDMYRNPGPVQYDGPGADAKAVSLCVEDQDYMGKIKKLQEYLDQVRTIVKPGCSQDVLKAALSVMASVTDVLTTISSSSTSGQQFA.

Belongs to the phosphofructokinase type A (PFKA) family. PPi-dependent PFK group II subfamily. Clade 'Long' sub-subfamily. Tetramer of two alpha (regulatory) and two beta (catalytic) chains. Expressed in roots and specific parts such as the trichomes of leaves, cotyledon veins, as well as in stamen and gynoecium of flowers.

Its subcellular location is the cytoplasm. It functions in the pathway carbohydrate degradation; glycolysis; D-glyceraldehyde 3-phosphate and glycerone phosphate from D-glucose: step 3/4. With respect to regulation, allosterically activated by fructose 2,6-bisphosphate. Functionally, regulatory subunit of pyrophosphate--fructose 6-phosphate 1-phosphotransferase. The polypeptide is Pyrophosphate--fructose 6-phosphate 1-phosphotransferase subunit alpha 2 (Arabidopsis thaliana (Mouse-ear cress)).